The sequence spans 256 residues: Myb family transcription factor MPH1 (256 aa).

The HTH myb-type domain maps to R14 to S74. Residues P45 to R70 constitute a DNA-binding region (H-T-H motif).

Highly expressed in the pulvinus and stem nodes. Expressed in the plumule of germinating seeds, coleoptile, leaves, internodes, leave sheaths, spikes and roots.

The protein localises to the nucleus. Probable transcription factor involved in the regulation of plant height by elongating internode cell length. Involved in the positive regulation of grain yield. May be involved in the regulation of genes related to cell elongation and cell wall synthesis, which are associated with plant height and yield phenotypes. Plays a role in tolerance to cadmium stress. In Oryza sativa subsp. japonica (Rice), this protein is Myb family transcription factor MPH1.